Here is a 145-residue protein sequence, read N- to C-terminus: Secreted LysM effector Vd2LysM (145 aa).

Positions 1–18 (MRPDVFVLFTAFLGPAAA) are cleaved as a signal peptide. LysM domains follow at residues 31-75 (GWYI…KIKV) and 96-140 (GWYH…DIVV).

It belongs to the secreted LysM effector family. Forms homodimers in a chitin-independent manner through interactions at the N-termini of EPL2 monomers. Homodimers are further polymerized in a chitin-dependent manner.

Its function is as follows. Secreted effector that enables the plant pathogenic fungus to manipulate host defenses for successful infection. Binds chitin, suppresses chitin-induced immune responses and protects hyphae against degradation by plant hydrolytic enzymes. Chitin-induced polymerization of homodimers forms a contiguous ELP2 highly oligomeric super-complexe that may precipitate at infection sites to eliminate chitin oligomers, and thus suppress the activation of chitin-induced plant immunity. This chain is Secreted LysM effector Vd2LysM, found in Verticillium dahliae (strain VdLs.17 / ATCC MYA-4575 / FGSC 10137) (Verticillium wilt).